Consider the following 184-residue polypeptide: LPS-assembly lipoprotein LptE (184 aa).

A signal peptide spans methionine 1 to glycine 19. A lipid anchor (N-palmitoyl cysteine) is attached at cysteine 20. Cysteine 20 carries S-diacylglycerol cysteine lipidation.

It belongs to the LptE lipoprotein family. Component of the lipopolysaccharide transport and assembly complex. Interacts with LptD.

It is found in the cell outer membrane. In terms of biological role, together with LptD, is involved in the assembly of lipopolysaccharide (LPS) at the surface of the outer membrane. Required for the proper assembly of LptD. Binds LPS and may serve as the LPS recognition site at the outer membrane. This is LPS-assembly lipoprotein LptE from Pectobacterium atrosepticum (strain SCRI 1043 / ATCC BAA-672) (Erwinia carotovora subsp. atroseptica).